The sequence spans 725 residues: MTDQGVAKEQYITVGSLKEIADPVKKFLRKGNRKGRNQKELKFRAKVVNQQLADETGSINFTTEGVAVNNNQTYEFTGSLKVVDYKLNLAVTSATPAKDQIANLGSEQLSKADIDQHSGKHIVLIKDLINLRIGQSFFARPKDIVHNNEQRRMTATLADNTAAIQAEISVNKKSITQEVLESLNSDKVYLFSDVVLNFNESNKLVARFNYRSNIVEANDRQIQQLSNNNLSAKEYSDETEKKALTDVLQIHEKKERVHKQQNKNKNPRNAHKNHNRQRPNLQETEPVKISGLQQWNNNQTVIGKIVSLRTEDKSLPAKQDGTSTTMVYLKGTIGDETGVIDFDMAEKRDCPRFKENDVVKFTSVMNKGRQSAEGKVGGHYIEVKKFGQYIILSDHNINNVNLNNNLSNLELTARPKNPNPRFIKGEFVGVKEEEKDGNIQYTYTVRSKEGEEQSITIRNKITTLKVGEIHKIDRERKRSSSRPNHQGGQRGNRSHSQNNRNQRNRDKHHNSQNNQPNKYKNTSVQNNNNNKNQQRSQSQNQRPPRNYDNRQGGENRNNRQRNENNRNNFNGNGHRVNNQNNQRNRNSSYPRNNNYDHHHNQQTDISGLEPGKRGQNVTGQVIEVSEFSKQINDKTLHFVKGRIADENANIRFDIKKPQNLEIKVGEVYNFKDVNNKVDDNGYHYIDLNRFGRVFPSHKKFQSINDKRNCDADRSSIEYVKKTVPN.

The Nuclear localization signal signature appears at 241–258 (KKALTDVLQIHEKKERVH). Disordered stretches follow at residues 252–284 (EKKERVHKQQNKNKNPRNAHKNHNRQRPNLQET) and 468–614 (EIHK…GKRG). Basic residues predominate over residues 256-277 (RVHKQQNKNKNPRNAHKNHNRQ). The span at 468–478 (EIHKIDRERKR) shows a compositional bias: basic and acidic residues. Positions 517-544 (NKYKNTSVQNNNNNKNQQRSQSQNQRPP) are enriched in low complexity. Over residues 545–564 (RNYDNRQGGENRNNRQRNEN) the composition is skewed to basic and acidic residues. Positions 565–593 (NRNNFNGNGHRVNNQNNQRNRNSSYPRNN) are enriched in low complexity.

Post-translationally, the N-terminus is blocked.

Its subcellular location is the nucleus. In terms of biological role, binds specifically to parallel G4-DNA, a four-stranded structure stabilized by tetrads of hydrogen-bonded guanines. The polypeptide is G-quartet DNA-binding protein TGP1 (TGP1) (Tetrahymena thermophila).